The sequence spans 133 residues: Putative redox protein FMP46, mitochondrial (133 aa).

Residues 1–21 (MSFWKTLQRQPRTISLFTNDI) constitute a mitochondrion transit peptide. Cys97 is an active-site residue.

It belongs to the FMP46 family.

The protein localises to the mitochondrion. Functionally, putative mitochondrial redox protein which could be involved in the reduction of small toxic molecules. This Saccharomyces cerevisiae (strain ATCC 204508 / S288c) (Baker's yeast) protein is Putative redox protein FMP46, mitochondrial (FMP46).